The following is a 72-amino-acid chain: Translation initiation factor IF-1 (72 aa).

The 72-residue stretch at 1 to 72 folds into the S1-like domain; it reads MAKEDSIEMQ…SKGRIVFRSR (72 aa).

This sequence belongs to the IF-1 family. As to quaternary structure, component of the 30S ribosomal translation pre-initiation complex which assembles on the 30S ribosome in the order IF-2 and IF-3, IF-1 and N-formylmethionyl-tRNA(fMet); mRNA recruitment can occur at any time during PIC assembly.

Its subcellular location is the cytoplasm. Functionally, one of the essential components for the initiation of protein synthesis. Stabilizes the binding of IF-2 and IF-3 on the 30S subunit to which N-formylmethionyl-tRNA(fMet) subsequently binds. Helps modulate mRNA selection, yielding the 30S pre-initiation complex (PIC). Upon addition of the 50S ribosomal subunit IF-1, IF-2 and IF-3 are released leaving the mature 70S translation initiation complex. The protein is Translation initiation factor IF-1 of Aeromonas hydrophila subsp. hydrophila (strain ATCC 7966 / DSM 30187 / BCRC 13018 / CCUG 14551 / JCM 1027 / KCTC 2358 / NCIMB 9240 / NCTC 8049).